Reading from the N-terminus, the 873-residue chain is Probable beta-glucosidase A (873 aa).

The N-terminal stretch at 1–19 (MRFGWLEVAALTAASVANA) is a signal peptide. 3 N-linked (GlcNAc...) asparagine glycosylation sites follow: Asn-71, Asn-222, and Asn-263. The active site involves Asp-291. 9 N-linked (GlcNAc...) asparagine glycosylation sites follow: Asn-326, Asn-333, Asn-365, Asn-453, Asn-534, Asn-553, Asn-575, Asn-679, and Asn-725. The disordered stretch occupies residues 731-764 (DSSDDPNYGWEDSEYIPEGARDGSPQPLLKAGGA).

Belongs to the glycosyl hydrolase 3 family.

It is found in the secreted. It catalyses the reaction Hydrolysis of terminal, non-reducing beta-D-glucosyl residues with release of beta-D-glucose.. It participates in glycan metabolism; cellulose degradation. Its function is as follows. Beta-glucosidases are one of a number of cellulolytic enzymes involved in the degradation of cellulosic biomass. Catalyzes the last step releasing glucose from the inhibitory cellobiose. The chain is Probable beta-glucosidase A (bglA) from Aspergillus fumigatus (strain CBS 144.89 / FGSC A1163 / CEA10) (Neosartorya fumigata).